Consider the following 176-residue polypeptide: ATP-dependent protease subunit HslV (176 aa).

The active site involves Thr2. Positions 157, 160, and 163 each coordinate Na(+).

This sequence belongs to the peptidase T1B family. HslV subfamily. In terms of assembly, a double ring-shaped homohexamer of HslV is capped on each side by a ring-shaped HslU homohexamer. The assembly of the HslU/HslV complex is dependent on binding of ATP.

It localises to the cytoplasm. The catalysed reaction is ATP-dependent cleavage of peptide bonds with broad specificity.. Its activity is regulated as follows. Allosterically activated by HslU binding. Its function is as follows. Protease subunit of a proteasome-like degradation complex believed to be a general protein degrading machinery. In Escherichia coli O139:H28 (strain E24377A / ETEC), this protein is ATP-dependent protease subunit HslV.